Here is a 770-residue protein sequence, read N- to C-terminus: ARF GTPase-activating protein GIT1 (770 aa).

One can recognise an Arf-GAP domain in the interval 1–124; sequence MSRKGPRAEV…AFVHKLPCRD (124 aa). Positions 1-124 are interaction with gamma-tubulin and localization to the centrosome; it reads MSRKGPRAEV…AFVHKLPCRD (124 aa). A C4-type zinc finger spans residues 11 to 34; that stretch reads CADCSAPDPGWASISRGVLVCDEC. ANK repeat units follow at residues 132–161, 166–195, and 199–228; these read DLSKQLHSSVRTGNLETCLRLLSLGAQANF, KGTTPLHVAAKAGQTLQAELLVVYGADPGS, and NGRTPIDYARQAGHHELAERLVECQYELTD. Tyr224 carries the post-translational modification Phosphotyrosine. Residues 245–374 are interaction with PCLO; that stretch reads HYIIPQMADR…QGKSLSSPTD (130 aa). The interval 253–424 is interaction with PTK2/FAK1; sequence DRSRQKCMSQ…NRARSMDSSD (172 aa). The interaction with ARHGEF7 stretch occupies residues 254-376; sequence RSRQKCMSQS…KSLSSPTDNL (123 aa). Positions 363–425 are disordered; that stretch reads RQQGKSLSSP…RARSMDSSDL (63 aa). Residues 366-383 are compositionally biased toward polar residues; sequence GKSLSSPTDNLELSARSQ. A phosphoserine mark is found at Ser368 and Ser371. Position 373 is a phosphothreonine (Thr373). Residues 375–596 form an interaction with NCK2 and GRIN3A region; that stretch reads NLELSARSQS…QEGSRHASKL (222 aa). The segment at 375–596 is required for localization at synapses; it reads NLELSARSQS…QEGSRHASKL (222 aa). A phosphoserine mark is found at Ser379 and Ser384. At Tyr392 the chain carries Phosphotyrosine. Phosphoserine occurs at positions 394 and 397. The span at 394–403 shows a compositional bias: acidic residues; it reads SVASDEDTDQ. The residue at position 401 (Thr401) is a Phosphothreonine. A phosphoserine mark is found at Ser419, Ser422, and Ser426. Residues 420 to 475 are interaction with MAPK1; that stretch reads MDSSDLSDGAVTLQEYLELKKALATSEAKVQQLMKVNSSLSDELRRLQREIHKLQA. The tract at residues 429–629 is interaction with IKBKG; the sequence is AVTLQEYLEL…EGKRFLELSK (201 aa). The stretch at 449–483 forms a coiled coil; it reads VQQLMKVNSSLSDELRRLQREIHKLQAENLQLRQP. Ser507 and Ser545 each carry phosphoserine. The residue at position 546 (Thr546) is a Phosphothreonine. A phosphotyrosine mark is found at Tyr554 and Tyr563. 4 positions are modified to phosphoserine: Ser570, Ser580, Ser601, and Ser605. Positions 578-588 are enriched in polar residues; the sequence is PSSPLLSCSQE. Residues 578-615 form a disordered region; the sequence is PSSPLLSCSQEGSRHASKLSRHGSGADSDYENTQSGDP. The residue at position 610 (Thr610) is a Phosphothreonine. At Ser639 the chain carries Phosphoserine. The tract at residues 646 to 770 is interaction with PXN and TGFB1I1; the sequence is PGLPSTEDVI…VTITTREKKQ (125 aa).

In terms of assembly, forms homodimers and possibly oligomers. May forms heterooligomers with GIT2. Interacts with G protein-coupled receptor kinases, including GRK2, GRK3, GRK5 and GRK6. Interacts with PPFIA1, PPFIA2 and PPFIA4. Interacts with GRIP1 and forms a ternary complex with PPFIA1 and GRIP1. Directly interacts with ARHGEF7/beta-PIX, forming in vitro a heptameric complex made of a GIT1 dimer and an ARHGEF7 trimer. Directly interacts with PXN/paxillin; this interaction is enhanced in the presence of ARHGEF7. Directly interacts (via C-terminus) with TGFB1I1/Hic-5 (via LD motif 3). Directly interacts with PTK2/FAK1. May interact with PTK2B/PYK2; this interaction may be indirect. Interacts with AMPA receptors GRIA2/3. Directly interacts with protein Piccolo/PCLO. Forms a complex with Ephrin-B1/EFNB1 and NCK2/GRB4 (via SH2); this interaction is important for spine morphogenesis and synapse formation. Interaction with NCK2 is transient and depends upon GIT1 phosphorylation at Tyr-392. Interacts with GRIN3A/GluN3A (via C-terminus); this interaction competes with GIT1 interaction with ARHGEF7 and limits synaptic localization of GIT1. Interacts with IKBKG/NEMO in resting bone mesenchymal stem cells, as well as in TNF-stimulated cells; this interaction may increase IKBKG affinity for 'Lys-63'-linked polyubiquitin chains. Interacts with GABA(A) receptors, including GABRB3 and GABRG2. Interacts with SCRIB. Interacts (via N- and C-terminus) with ENTR1/SDCCAG3 (via N-terminus); this interaction is direct. May form a tripartite complex with ENTR1 and PTPN13. Interacts with YWHAZ. Interacts with PAK1. Interacts with PAK3. Directly interacts (via N-terminus) with gamma-tubulin. Interacts with MAPK1 and MAPK3; this interaction is required for MAPK1/3 recruitment to focal adhesions. In terms of processing, phosphorylated on tyrosine residues by PTK2/FAK1 and SRC in growing fibroblasts. Phosphorylation at Tyr-392 is induced by activation of Ephrin-B1/EFNB1 and catalyzed by SRC family kinases. It is required for the interaction with NCK2 and for GIT1 recruitment to synapses in hippocampal neurons. In terms of tissue distribution, expressed in the brain (at protein level). Also expressed at high levels in lung and heart. In lung, expressed in endothelial cells, especially in capillaries; also expressed in smooth muscle and epithelial cells of bronchi (at protein level). Expressed in bone marrow mesenchymal stem cells, as well as in osteoclasts and bone marrow-derived macrophages (at protein level).

It localises to the cytoplasm. It is found in the presynapse. Its subcellular location is the postsynapse. The protein localises to the postsynaptic density. The protein resides in the cell junction. It localises to the focal adhesion. It is found in the cell projection. Its subcellular location is the lamellipodium. The protein localises to the cytoskeleton. The protein resides in the microtubule organizing center. It localises to the centrosome. It is found in the spindle pole. In terms of biological role, GTPase-activating protein for ADP ribosylation factor family members, including ARF1. Multidomain scaffold protein that interacts with numerous proteins and therefore participates in many cellular functions, including receptor internalization, focal adhesion remodeling, and signaling by both G protein-coupled receptors and tyrosine kinase receptors. Through PAK1 activation, positively regulates microtubule nucleation during interphase. Plays a role in the regulation of cytokinesis; for this function, may act in a pathway also involving ENTR1 and PTPN13. May promote cell motility both by regulating focal complex dynamics and by the activation of RAC1. May act as scaffold for MAPK1/3 signal transduction, recruiting MAPK1/3 to focal adhesions after EGF stimulation via a Src-dependent pathway, hence stimulating cell migration. Plays a role in brain development and function. Involved in the regulation of spine density and synaptic plasticity that is required for processes involved in learning. Plays an important role in dendritic spine morphogenesis and synapse formation. In hippocampal neurons, recruits guanine nucleotide exchange factors (GEFs), such as ARHGEF7/beta-PIX, to the synaptic membrane. These in turn locally activate RAC1, which is an essential step for spine morphogenesis and synapse formation. May contribute to the organization of presynaptic active zones through oligomerization and formation of a Piccolo/PCLO-based protein network, which includes ARHGEF7/beta-PIX and FAK1. In neurons, through its interaction with liprin-alpha family members, may be required for AMPA receptor (GRIA2/3) proper targeting to the cell membrane. In complex with GABA(A) receptors and ARHGEF7, plays a crucial role in regulating GABA(A) receptor synaptic stability, maintaining GPHN/gephyrin scaffolds and hence GABAergic inhibitory synaptic transmission, by locally coordinating RAC1 and PAK1 downstream effector activity, leading to F-actin stabilization. May also be important for RAC1 downstream signaling pathway through PAK3 and regulation of neuronal inhibitory transmission at presynaptic input. Required for successful bone regeneration during fracture healing. The function in intramembranous ossification may, at least partly, exerted by macrophages in which GIT1 is a key negative regulator of redox homeostasis, IL1B production, and glycolysis, acting through the ERK1/2/NRF2/NFE2L2 axis. May play a role in angiogenesis during fracture healing. In this process, may regulate activation of the canonical NF-kappa-B signal in bone mesenchymal stem cells by enhancing the interaction between NEMO and 'Lys-63'-ubiquitinated RIPK1/RIP1, eventually leading to enhanced production of VEGFA and others angiogenic factors. Essential for VEGF signaling through the activation of phospholipase C-gamma and ERK1/2, hence may control endothelial cell proliferation and angiogenesis. The chain is ARF GTPase-activating protein GIT1 (Git1) from Mus musculus (Mouse).